The following is a 381-amino-acid chain: Spindlin interactor and repressor of chromatin-binding protein (381 aa).

Lys-49 is covalently cross-linked (Glycyl lysine isopeptide (Lys-Gly) (interchain with G-Cter in SUMO2)). Ser-122 and Ser-149 each carry phosphoserine. Positions 148–158 (PSLPSLESGQD) are enriched in polar residues. The disordered stretch occupies residues 148–170 (PSLPSLESGQDGQPDPISNPDPV). Glycyl lysine isopeptide (Lys-Gly) (interchain with G-Cter in SUMO2) cross-links involve residues Lys-190 and Lys-221. 3 disordered regions span residues 203–270 (PVTP…TDGS), 285–320 (LRTT…LRGT), and 335–381 (AVSL…GSGV). Positions 219–229 (RWKESPENEPA) are enriched in basic and acidic residues. 2 positions are modified to phosphoserine: Ser-249 and Ser-252. Over residues 288-299 (TDCKDSSKDSRA) the composition is skewed to basic and acidic residues. Residues Lys-291 and Lys-295 each participate in a glycyl lysine isopeptide (Lys-Gly) (interchain with G-Cter in SUMO2) cross-link. The span at 304–315 (PQPQNPSSASPP) shows a compositional bias: low complexity. Phosphoserine is present on residues Ser-310 and Ser-313.

As to quaternary structure, interacts with SPIN1, SPIN2A, SPIN2B, SPIN3 and SPIN4. Interacts with TCF7L2 in a SPIN1-dependent manner. Interacts with PARP1; promoting PARP1 ADP-ribosyltransferase activity.

The protein localises to the nucleus. Its subcellular location is the chromosome. Chromatin protein that stabilizes SPIN1 and enhances its association with histone H3 trimethylated at both 'Lys-4' and 'Lys-9' (H3K4me3K9me3). Positively regulates poly-ADP-ribosylation in response to DNA damage; acts by facilitating PARP1 ADP-ribosyltransferase activity. The sequence is that of Spindlin interactor and repressor of chromatin-binding protein from Mus musculus (Mouse).